The chain runs to 402 residues: CCA-adding enzyme (402 aa).

ATP contacts are provided by Gly32 and Arg35. CTP contacts are provided by Gly32 and Arg35. Residues Asp45 and Asp47 each coordinate Mg(2+). Arg116, Asp159, Arg162, Arg165, and Arg168 together coordinate ATP. CTP is bound by residues Arg116, Asp159, Arg162, Arg165, and Arg168.

The protein belongs to the tRNA nucleotidyltransferase/poly(A) polymerase family. Bacterial CCA-adding enzyme type 3 subfamily. Homodimer. The cofactor is Mg(2+).

It catalyses the reaction a tRNA precursor + 2 CTP + ATP = a tRNA with a 3' CCA end + 3 diphosphate. The catalysed reaction is a tRNA with a 3' CCA end + 2 CTP + ATP = a tRNA with a 3' CCACCA end + 3 diphosphate. Catalyzes the addition and repair of the essential 3'-terminal CCA sequence in tRNAs without using a nucleic acid template. Adds these three nucleotides in the order of C, C, and A to the tRNA nucleotide-73, using CTP and ATP as substrates and producing inorganic pyrophosphate. tRNA 3'-terminal CCA addition is required both for tRNA processing and repair. Also involved in tRNA surveillance by mediating tandem CCA addition to generate a CCACCA at the 3' terminus of unstable tRNAs. While stable tRNAs receive only 3'-terminal CCA, unstable tRNAs are marked with CCACCA and rapidly degraded. This chain is CCA-adding enzyme, found in Streptococcus pyogenes serotype M2 (strain MGAS10270).